The primary structure comprises 337 residues: Protein BIG GRAIN 1-like (337 aa).

Disordered regions lie at residues Met1–Ser32, Ser120–Ser163, and Lys179–Ser235. The segment covering His137 to Ala146 has biased composition (basic and acidic residues). 2 stretches are compositionally biased toward low complexity: residues Pro150–Ser163 and Pro195–Ala209.

This sequence belongs to the BIG GRAIN 1 (BG1) plant protein family.

The protein resides in the cell membrane. Involved in auxin transport. Regulator of the auxin signaling pathway. In Oryza sativa subsp. japonica (Rice), this protein is Protein BIG GRAIN 1-like.